Consider the following 123-residue polypeptide: Histone H1-like protein HC1 (123 aa).

The tract at residues Ile-54–Lys-123 is disordered. Residues Leu-61 to Lys-75 are compositionally biased toward basic residues. Over residues Lys-85–Pro-102 the composition is skewed to low complexity. Positions Ala-103 to Lys-123 are enriched in basic residues.

The protein belongs to the histone H1/H5 family. HCT subfamily.

Its function is as follows. Might have a role analogous to that of eukaryotic histone proteins. The protein is Histone H1-like protein HC1 (hctA) of Chlamydia pneumoniae (Chlamydophila pneumoniae).